A 219-amino-acid polypeptide reads, in one-letter code: Proteasome subunit beta type-9 (219 aa).

Residues 1-20 (MLQAGAPTAGSFRTGEVHTG) constitute a propeptide, removed in mature form. Thr-21 (nucleophile) is an active-site residue. 2 positions are modified to N6-acetyllysine: Lys-53 and Lys-109.

It belongs to the peptidase T1B family. As to quaternary structure, the 26S proteasome consists of a 20S proteasome core and two 19S regulatory subunits. The 20S proteasome core is composed of 28 subunits that are arranged in four stacked rings, resulting in a barrel-shaped structure. The two end rings are each formed by seven alpha subunits, and the two central rings are each formed by seven beta subunits. The catalytic chamber with the active sites is on the inside of the barrel. Component of the immunoproteasome, where it displaces the equivalent housekeeping subunit PSMB6. Component of the spermatoproteasome, a form of the proteasome specifically found in testis. Interacts with NCOA2 and NCOA3. In terms of processing, autocleaved. The resulting N-terminal Thr residue of the mature subunit is responsible for the nucleophile proteolytic activity. As to expression, detected in the cytoplasmic lobe of elongated spermatids, in residual bodies, and in the acrosomal cap of round spermatids.

It localises to the cytoplasm. Its subcellular location is the nucleus. The catalysed reaction is Cleavage of peptide bonds with very broad specificity.. The proteasome is a multicatalytic proteinase complex which is characterized by its ability to cleave peptides with Arg, Phe, Tyr, Leu, and Glu adjacent to the leaving group at neutral or slightly basic pH. The proteasome has an ATP-dependent proteolytic activity. This subunit is involved in antigen processing to generate class I binding peptides. The chain is Proteasome subunit beta type-9 (Psmb9) from Rattus norvegicus (Rat).